We begin with the raw amino-acid sequence, 157 residues long: Protein MGF 110-13L (157 aa).

Transmembrane regions (helical) follow at residues Q14–C34 and L39–V59.

This sequence belongs to the asfivirus MGF 110 family.

It is found in the host membrane. Functionally, plays a role in virus cell tropism, and may be required for efficient virus replication in macrophages. In African swine fever virus (isolate Tick/Malawi/Lil 20-1/1983) (ASFV), this protein is Protein MGF 110-13L.